A 392-amino-acid chain; its full sequence is Probable tRNA sulfurtransferase (392 aa).

In terms of domain architecture, THUMP spans 59–166 (DEIIERVKKV…ECSFVFTKKV (108 aa)). Residues 183-184 (LL), 208-209 (HF), Arg-265, Gly-287, and Gln-296 contribute to the ATP site.

Belongs to the ThiI family.

The protein localises to the cytoplasm. The enzyme catalyses [ThiI sulfur-carrier protein]-S-sulfanyl-L-cysteine + a uridine in tRNA + 2 reduced [2Fe-2S]-[ferredoxin] + ATP + H(+) = [ThiI sulfur-carrier protein]-L-cysteine + a 4-thiouridine in tRNA + 2 oxidized [2Fe-2S]-[ferredoxin] + AMP + diphosphate. The catalysed reaction is [ThiS sulfur-carrier protein]-C-terminal Gly-Gly-AMP + S-sulfanyl-L-cysteinyl-[cysteine desulfurase] + AH2 = [ThiS sulfur-carrier protein]-C-terminal-Gly-aminoethanethioate + L-cysteinyl-[cysteine desulfurase] + A + AMP + 2 H(+). It participates in cofactor biosynthesis; thiamine diphosphate biosynthesis. In terms of biological role, catalyzes the ATP-dependent transfer of a sulfur to tRNA to produce 4-thiouridine in position 8 of tRNAs, which functions as a near-UV photosensor. Also catalyzes the transfer of sulfur to the sulfur carrier protein ThiS, forming ThiS-thiocarboxylate. This is a step in the synthesis of thiazole, in the thiamine biosynthesis pathway. The sulfur is donated as persulfide by IscS. This Alkaliphilus metalliredigens (strain QYMF) protein is Probable tRNA sulfurtransferase.